Here is a 401-residue protein sequence, read N- to C-terminus: Enoyl-[acyl-carrier-protein] reductase [NADH] (401 aa).

NAD(+)-binding positions include 48–53 (GASSGY), 74–75 (FE), 111–112 (DA), and 140–141 (LA). Tyr-226 serves as a coordination point for substrate. Residue Tyr-236 is the Proton donor of the active site. Residues Lys-245 and 274–276 (VVT) each bind NAD(+).

The protein belongs to the TER reductase family. Monomer.

It catalyses the reaction a 2,3-saturated acyl-[ACP] + NAD(+) = a (2E)-enoyl-[ACP] + NADH + H(+). It participates in lipid metabolism; fatty acid biosynthesis. In terms of biological role, involved in the final reduction of the elongation cycle of fatty acid synthesis (FAS II). Catalyzes the reduction of a carbon-carbon double bond in an enoyl moiety that is covalently linked to an acyl carrier protein (ACP). This Xylella fastidiosa (strain Temecula1 / ATCC 700964) protein is Enoyl-[acyl-carrier-protein] reductase [NADH].